Here is a 345-residue protein sequence, read N- to C-terminus: S-adenosylmethionine:tRNA ribosyltransferase-isomerase (345 aa).

It belongs to the QueA family. As to quaternary structure, monomer.

It localises to the cytoplasm. The catalysed reaction is 7-aminomethyl-7-carbaguanosine(34) in tRNA + S-adenosyl-L-methionine = epoxyqueuosine(34) in tRNA + adenine + L-methionine + 2 H(+). It participates in tRNA modification; tRNA-queuosine biosynthesis. In terms of biological role, transfers and isomerizes the ribose moiety from AdoMet to the 7-aminomethyl group of 7-deazaguanine (preQ1-tRNA) to give epoxyqueuosine (oQ-tRNA). The chain is S-adenosylmethionine:tRNA ribosyltransferase-isomerase from Shewanella pealeana (strain ATCC 700345 / ANG-SQ1).